Reading from the N-terminus, the 809-residue chain is Cyclic nucleotide-gated channel beta-3 (809 aa).

Disordered stretches follow at residues 1 to 121 (MFKS…PPAA) and 153 to 178 (GDLSSPEASPQTAKPTAVPPVKESDD). Residues 1-218 (MFKSLTKVNK…SIDSYTDRLY (218 aa)) lie on the Cytoplasmic side of the membrane. The segment covering 22-31 (QSSRRNEEGS) has biased composition (basic and acidic residues). The span at 32–43 (HPSNQSQQTTAQ) shows a compositional bias: polar residues. Residues 44-53 (EENKGEEKSL) show a composition bias toward basic and acidic residues. Over residues 55-88 (TKSTPVTSEEPHTNIQDKLSKKNSSGDLTTNPDP) the composition is skewed to polar residues. A helical transmembrane segment spans residues 219–242 (LLWLLLVTLAYNWNCCFIPLRLVF). At 243–249 (PYQTADN) the chain is on the extracellular side. The chain crosses the membrane as a helical span at residues 250–270 (IHYWLIADIICDIIYLYDMLF). Residues 271 to 299 (IQPRLQFVRGGDIIVDSNELRKHYRTSTK) lie on the Cytoplasmic side of the membrane. Residues 300–317 (FQLDVASIIPFDICYLFF) form a helical membrane-spanning segment. Over 318-320 (GFN) the chain is Extracellular. The helical transmembrane segment at 321 to 335 (PMFRANRMLKYTSFF) threads the bilayer. Over 336-348 (EFNHHLESIMDKA) the chain is Cytoplasmic. Residues 348–447 (AYIYRVIRTT…IGQMRDVIGA (100 aa)) are ion conduction pathway. The chain crosses the membrane as a helical span at residues 349–371 (YIYRVIRTTGYLLFILHINACVY). Residues 372–393 (YWASNYEGIGTTRWVYDGEGNE) lie on the Extracellular side of the membrane. The next 2 membrane-spanning stretches (helical) occupy residues 394-420 (YLRCYYWAVRTLITIGGLPEPQTLFEI) and 421-445 (VFQLLNFFSGVFVFSSLIGQMRDVI). The selectivity filter stretch occupies residues 407 to 410 (TIGG). Over 446–809 (GAATANQNYF…TIEVKEKAKQ (364 aa)) the chain is Cytoplasmic. The interval 450-526 (ANQNYFRACM…SIISKVDLFK (77 aa)) is C-linker. Residues 530–646 (TQMIYDMLLR…ILMKKARVLL (117 aa)) are cyclic nucleotide-binding domain. 3',5'-cyclic GMP contacts are provided by Gly591, Glu592, Arg604, and Thr605. Residues 698-776 (QAAQKKENSE…PHSVRRTVLP (79 aa)) are disordered. Residues 716–755 (NEDKQKENEDKQKENEDKGKENEDKDKGREPEEKPLDRPE) are compositionally biased toward basic and acidic residues.

This sequence belongs to the cyclic nucleotide-gated cation channel (TC 1.A.1.5) family. CNGB3 subfamily. In terms of assembly, forms heterotetrameric channels composed of CNGA3 and CNGB3 subunits with 3:1 stoichiometry. As to expression, expressed specifically in the retina.

It is found in the cell membrane. The catalysed reaction is Ca(2+)(in) = Ca(2+)(out). It carries out the reaction Na(+)(in) = Na(+)(out). It catalyses the reaction K(+)(in) = K(+)(out). The enzyme catalyses NH4(+)(in) = NH4(+)(out). The catalysed reaction is Rb(+)(in) = Rb(+)(out). It carries out the reaction Li(+)(in) = Li(+)(out). It catalyses the reaction Cs(+)(in) = Cs(+)(out). Its function is as follows. Pore-forming subunit of the cone cyclic nucleotide-gated channel. Mediates cone photoresponses at bright light converting transient changes in intracellular cGMP levels into electrical signals. In the dark, cGMP levels are high and keep the channel open enabling a steady inward current carried by Na(+) and Ca(2+) ions that leads to membrane depolarization and neurotransmitter release from synaptic terminals. Upon photon absorption cGMP levels decline leading to channel closure and membrane hyperpolarization that ultimately slows neurotransmitter release and signals the presence of light, the end point of the phototransduction cascade. Conducts cGMP- and cAMP-gated ion currents, with permeability for monovalent and divalent cations. The sequence is that of Cyclic nucleotide-gated channel beta-3 from Homo sapiens (Human).